Here is a 630-residue protein sequence, read N- to C-terminus: Adagio-like protein 3 (630 aa).

The PAS domain occupies 54-126 (EDEAAAWEGR…PLVDPMVVSE (73 aa)). C102 bears the S-4a-FMN cysteine mark. Positions 220 to 268 (YCCILQLSDEVLAHNILSRLSPRDVASIGSVCTRMHELTKNDHLRKMVC) constitute an F-box domain. 5 Kelch repeats span residues 380–430 (SWLV…CTLD), 432–483 (SKLV…SVFG), 485–537 (TKLF…RLDH), 545–597 (GRII…CVVG), and 599–629 (TRVL…PDED).

This sequence belongs to the ADAGIO family. Post-translationally, FMN binds covalently to cysteine after exposure to blue light and is reversed in the dark.

Its subcellular location is the nucleus. Its pathway is protein modification; protein ubiquitination. Functionally, component of an E3 ubiquitin ligase complex that plays a central role in blue light-dependent circadian cycles. Acts as a blue light photoreceptor, due to the presence of FMN, that mediates light-regulated protein degradation of critical clock components by targeting them to the proteasome complex. The SCF(ADO3) E3 ubiquitin ligase complex is involved in the regulation of circadian clock-dependent processes including transition to flowering time, hypocotyl elongation, cotyledons and leaf movement rhythms. This chain is Adagio-like protein 3, found in Oryza sativa subsp. japonica (Rice).